Reading from the N-terminus, the 398-residue chain is Probable pectate lyase P56 (398 aa).

The first 27 residues, 1–27 (MEYSYRTKINVLFIVLILFVFAALGTA), serve as a signal peptide directing secretion. Asn-135 carries N-linked (GlcNAc...) asparagine glycosylation. Asp-192, Asp-217, and Asp-221 together coordinate Ca(2+). Asn-228 is a glycosylation site (N-linked (GlcNAc...) asparagine). Arg-273 is a catalytic residue.

Belongs to the polysaccharide lyase 1 family. Requires Ca(2+) as cofactor. As to expression, expressed in anthers and pollen.

It carries out the reaction Eliminative cleavage of (1-&gt;4)-alpha-D-galacturonan to give oligosaccharides with 4-deoxy-alpha-D-galact-4-enuronosyl groups at their non-reducing ends.. It functions in the pathway glycan metabolism; pectin degradation; 2-dehydro-3-deoxy-D-gluconate from pectin: step 2/5. Might be needed during pollen development and tube growth. This is Probable pectate lyase P56 (LAT56) from Solanum lycopersicum (Tomato).